The primary structure comprises 452 residues: UPF0210 protein Csac_1314 (452 aa).

Belongs to the UPF0210 family. Homodimer.

The protein is UPF0210 protein Csac_1314 of Caldicellulosiruptor saccharolyticus (strain ATCC 43494 / DSM 8903 / Tp8T 6331).